Reading from the N-terminus, the 218-residue chain is Cytochrome b6 (218 aa).

The chain crosses the membrane as a helical span at residues 35–55; it reads IFYCLGGITLVCFLIQFATGF. Position 38 (cysteine 38) interacts with heme c. Histidine 89 and histidine 103 together coordinate heme b. 3 helical membrane passes run 93-113, 119-139, and 189-209; these read ASMM…TGGF, LTWV…VTGY, and LHTF…FLMI. 2 residues coordinate heme b: histidine 190 and histidine 205.

This sequence belongs to the cytochrome b family. PetB subfamily. In terms of assembly, the 4 large subunits of the cytochrome b6-f complex are cytochrome b6, subunit IV (17 kDa polypeptide, PetD), cytochrome f and the Rieske protein, while the 4 small subunits are PetG, PetL, PetM and PetN. The complex functions as a dimer. Requires heme b as cofactor. Heme c serves as cofactor.

Its subcellular location is the cellular thylakoid membrane. Functionally, component of the cytochrome b6-f complex, which mediates electron transfer between photosystem II (PSII) and photosystem I (PSI), cyclic electron flow around PSI, and state transitions. The sequence is that of Cytochrome b6 from Prochlorococcus marinus (strain SARG / CCMP1375 / SS120).